Here is a 137-residue protein sequence, read N- to C-terminus: Ribosome-binding factor A (137 aa).

It belongs to the RbfA family. Monomer. Binds 30S ribosomal subunits, but not 50S ribosomal subunits or 70S ribosomes.

The protein localises to the cytoplasm. In terms of biological role, one of several proteins that assist in the late maturation steps of the functional core of the 30S ribosomal subunit. Associates with free 30S ribosomal subunits (but not with 30S subunits that are part of 70S ribosomes or polysomes). Required for efficient processing of 16S rRNA. May interact with the 5'-terminal helix region of 16S rRNA. This Nitrobacter hamburgensis (strain DSM 10229 / NCIMB 13809 / X14) protein is Ribosome-binding factor A.